The sequence spans 578 residues: Ketol-acid reductoisomerase, chloroplastic (578 aa).

The N-terminal 52 residues, 1 to 52 (MAASTTLALSHPKTLAAAAAAAPKAPTAPAAVSFPVSHAACAPLAARRRAVT), are a transit peptide targeting the chloroplast. The KARI N-terminal Rossmann domain maps to 90–288 (VRGGRNLFPL…ALGSPFTFAT (199 aa)). NADP(+)-binding positions include 111 to 118 (GVIGWGSQ), 144 to 149 (RKGSKS), and 183 to 187 (SDAAQ). His208 is a catalytic residue. KARI C-terminal knotted domains follow at residues 289–437 (TLEQ…RPEN) and 438–574 (DLGP…RPEL). Mg(2+)-binding residues include Asp297, Glu301, Glu474, and Glu478. Residue Ser500 coordinates substrate.

It belongs to the ketol-acid reductoisomerase family. In terms of assembly, homodimer. The cofactor is Mg(2+).

It localises to the plastid. The protein localises to the chloroplast. The catalysed reaction is (2R)-2,3-dihydroxy-3-methylbutanoate + NADP(+) = (2S)-2-acetolactate + NADPH + H(+). It carries out the reaction (2R,3R)-2,3-dihydroxy-3-methylpentanoate + NADP(+) = (S)-2-ethyl-2-hydroxy-3-oxobutanoate + NADPH + H(+). The protein operates within amino-acid biosynthesis; L-isoleucine biosynthesis; L-isoleucine from 2-oxobutanoate: step 2/4. It functions in the pathway amino-acid biosynthesis; L-valine biosynthesis; L-valine from pyruvate: step 2/4. The chain is Ketol-acid reductoisomerase, chloroplastic from Oryza sativa subsp. japonica (Rice).